A 401-amino-acid chain; its full sequence is Tryptophan synthase beta chain (401 aa).

K92 is subject to N6-(pyridoxal phosphate)lysine.

Belongs to the TrpB family. In terms of assembly, tetramer of two alpha and two beta chains. The cofactor is pyridoxal 5'-phosphate.

The enzyme catalyses (1S,2R)-1-C-(indol-3-yl)glycerol 3-phosphate + L-serine = D-glyceraldehyde 3-phosphate + L-tryptophan + H2O. Its pathway is amino-acid biosynthesis; L-tryptophan biosynthesis; L-tryptophan from chorismate: step 5/5. The beta subunit is responsible for the synthesis of L-tryptophan from indole and L-serine. The chain is Tryptophan synthase beta chain from Ruthia magnifica subsp. Calyptogena magnifica.